A 330-amino-acid polypeptide reads, in one-letter code: Aspartate--ammonia ligase (330 aa).

This sequence belongs to the class-II aminoacyl-tRNA synthetase family. AsnA subfamily.

The protein localises to the cytoplasm. The enzyme catalyses L-aspartate + NH4(+) + ATP = L-asparagine + AMP + diphosphate + H(+). It participates in amino-acid biosynthesis; L-asparagine biosynthesis; L-asparagine from L-aspartate (ammonia route): step 1/1. The chain is Aspartate--ammonia ligase from Escherichia coli O8 (strain IAI1).